The sequence spans 719 residues: Ribosomal RNA large subunit methyltransferase K/L (719 aa).

The region spanning 43–154 (IGYKACLWSR…KGKANITLDL (112 aa)) is the THUMP domain.

The protein belongs to the methyltransferase superfamily. RlmKL family.

The protein localises to the cytoplasm. The enzyme catalyses guanosine(2445) in 23S rRNA + S-adenosyl-L-methionine = N(2)-methylguanosine(2445) in 23S rRNA + S-adenosyl-L-homocysteine + H(+). It carries out the reaction guanosine(2069) in 23S rRNA + S-adenosyl-L-methionine = N(2)-methylguanosine(2069) in 23S rRNA + S-adenosyl-L-homocysteine + H(+). Functionally, specifically methylates the guanine in position 2445 (m2G2445) and the guanine in position 2069 (m7G2069) of 23S rRNA. This Aeromonas salmonicida (strain A449) protein is Ribosomal RNA large subunit methyltransferase K/L.